Consider the following 578-residue polypeptide: Protein RIK (578 aa).

The tract at residues 1–34 (MTEDNDEARVPLSDSSTTNDASRTRQRRKRKWDK) is disordered. One can recognise a KH domain in the interval 206-273 (SSNVAARIRG…KSIDDAKRLA (68 aa)). Residues 413 to 425 (ATSLSIPSDNASN) show a composition bias toward polar residues. A disordered region spans residues 413 to 578 (ATSLSIPSDN…DPDEPLTTRS (166 aa)). The segment covering 472–492 (PPSPRSVMPPPPPKTIAPPPS) has biased composition (pro residues). Low complexity-rich tracts occupy residues 493–503 (KTMSPPSSKSM) and 510–521 (SKTMSPLSSKSM). Residues 560 to 572 (YGDDEDDDDDPDE) show a composition bias toward acidic residues.

In terms of assembly, interacts with AS1. In terms of tissue distribution, expressed in vegetative tissues.

The protein localises to the nucleus. This Arabidopsis thaliana (Mouse-ear cress) protein is Protein RIK (RIK).